The primary structure comprises 396 residues: tRNA(Met) cytidine acetate ligase (396 aa).

Residues 9–22 (IVEYNPFHNGHLHH), Gly103, Asn154, and Arg179 contribute to the ATP site.

This sequence belongs to the TmcAL family.

The protein localises to the cytoplasm. It catalyses the reaction cytidine(34) in elongator tRNA(Met) + acetate + ATP = N(4)-acetylcytidine(34) in elongator tRNA(Met) + AMP + diphosphate. Catalyzes the formation of N(4)-acetylcytidine (ac(4)C) at the wobble position of elongator tRNA(Met), using acetate and ATP as substrates. First activates an acetate ion to form acetyladenylate (Ac-AMP) and then transfers the acetyl group to tRNA to form ac(4)C34. This chain is tRNA(Met) cytidine acetate ligase, found in Fusobacterium nucleatum subsp. nucleatum (strain ATCC 25586 / DSM 15643 / BCRC 10681 / CIP 101130 / JCM 8532 / KCTC 2640 / LMG 13131 / VPI 4355).